The primary structure comprises 624 residues: Actin-related protein 8 (624 aa).

At methionine 1 the chain carries N-acetylmethionine. Over residues 1–25 the composition is skewed to basic and acidic residues; the sequence is MTQAEKGEAENGKEKGGEKEKEQRG. Positions 1-29 are disordered; the sequence is MTQAEKGEAENGKEKGGEKEKEQRGVKRP. Positions 55 and 56 each coordinate ATP. A Phosphoserine modification is found at serine 132. ATP is bound at residue 283 to 286; sequence DVGD. Position 412 is a phosphoserine (serine 412). The disordered stretch occupies residues 430–462; that stretch reads SKQEQSAKATADRKSASKPIGFEGDLRGQSSDL.

It belongs to the actin family. ARP8 subfamily. In terms of assembly, component of the chromatin remodeling INO80 complex; specifically part of a complex module associated with the DBINO domain of INO80. Exists as monomers and dimers, but the dimer is most probably the biologically relevant form required for stable interactions with histones that exploits the twofold symmetry of the nucleosome core.

The protein localises to the nucleus. Its subcellular location is the chromosome. Plays an important role in the functional organization of mitotic chromosomes. Exhibits low basal ATPase activity, and unable to polymerize. In terms of biological role, proposed core component of the chromatin remodeling INO80 complex which is involved in transcriptional regulation, DNA replication and probably DNA repair. Required for the recruitment of INO80 (and probably the INO80 complex) to sites of DNA damage Strongly prefer nucleosomes and H3-H4 tetramers over H2A-H2B dimers, suggesting it may act as a nucleosome recognition module within the complex. The chain is Actin-related protein 8 (ACTR8) from Bos taurus (Bovine).